The chain runs to 433 residues: Enolase (433 aa).

(2R)-2-phosphoglycerate is bound at residue Q167. Catalysis depends on E209, which acts as the Proton donor. Mg(2+) is bound by residues D246, E291, and D318. Positions 343, 372, 373, and 394 each coordinate (2R)-2-phosphoglycerate. Catalysis depends on K343, which acts as the Proton acceptor.

Belongs to the enolase family. As to quaternary structure, component of the RNA degradosome, a multiprotein complex involved in RNA processing and mRNA degradation. Mg(2+) is required as a cofactor.

Its subcellular location is the cytoplasm. It is found in the secreted. It localises to the cell surface. The enzyme catalyses (2R)-2-phosphoglycerate = phosphoenolpyruvate + H2O. It functions in the pathway carbohydrate degradation; glycolysis; pyruvate from D-glyceraldehyde 3-phosphate: step 4/5. Catalyzes the reversible conversion of 2-phosphoglycerate (2-PG) into phosphoenolpyruvate (PEP). It is essential for the degradation of carbohydrates via glycolysis. The polypeptide is Enolase (Vibrio vulnificus (strain CMCP6)).